Here is a 278-residue protein sequence, read N- to C-terminus: Trehalose/maltose transport system permease protein MalG (278 aa).

The next 6 membrane-spanning stretches (helical) occupy residues 12-32, 74-94, 106-126, 141-161, 186-206, and 242-262; these read IIGAILMAIICLFPFIWMIVV, IIIASLVTLTTVSISSLAAYA, IPIFVLGLSMFPQISLVGYLF, LYFPYVAWTLPLSLWILLSYF, IILPLSAPALFSTALLVFIAA, and GSVMAASVISTIPLVIMALLF. Positions 70-262 constitute an ABC transmembrane type-1 domain; it reads LKNSIIIASL…IPLVIMALLF (193 aa).

Belongs to the binding-protein-dependent transport system permease family. In terms of assembly, the complex is composed of two ATP-binding proteins (MalK), two transmembrane proteins (MalG and MalF) and a solute-binding protein (MalE).

Its subcellular location is the cell membrane. Part of the ABC transporter complex MalEFGK involved in trehalose/maltose import. Responsible for the translocation of the substrate across the membrane. In Thermococcus litoralis (strain ATCC 51850 / DSM 5473 / JCM 8560 / NS-C), this protein is Trehalose/maltose transport system permease protein MalG (malG).